Reading from the N-terminus, the 145-residue chain is Allergen Sin a 1 (145 aa).

A disordered region spans residues S34–P62. A propeptide spanning residues W40–N54 is cleaved from the precursor. Positions L42 to E53 are enriched in acidic residues.

This sequence belongs to the 2S seed storage albumins family. The protein consists of two chains linked by disulfide bonds.

This is a 2S seed storage protein. This is Allergen Sin a 1 from Sinapis alba (White mustard).